A 267-amino-acid polypeptide reads, in one-letter code: Enolase-phosphatase E1 (267 aa).

Mg(2+) is bound by residues aspartate 11 and glutamate 13. Substrate contacts are provided by residues 155–156 (SS) and lysine 189. Aspartate 215 contributes to the Mg(2+) binding site.

This sequence belongs to the HAD-like hydrolase superfamily. MasA/MtnC family. Monomer. Mg(2+) is required as a cofactor.

It is found in the cytoplasm. The protein localises to the nucleus. The catalysed reaction is 5-methylsulfanyl-2,3-dioxopentyl phosphate + H2O = 1,2-dihydroxy-5-(methylsulfanyl)pent-1-en-3-one + phosphate. The protein operates within amino-acid biosynthesis; L-methionine biosynthesis via salvage pathway; L-methionine from S-methyl-5-thio-alpha-D-ribose 1-phosphate: step 3/6. It functions in the pathway amino-acid biosynthesis; L-methionine biosynthesis via salvage pathway; L-methionine from S-methyl-5-thio-alpha-D-ribose 1-phosphate: step 4/6. Bifunctional enzyme that catalyzes the enolization of 2,3-diketo-5-methylthiopentyl-1-phosphate (DK-MTP-1-P) into the intermediate 2-hydroxy-3-keto-5-methylthiopentenyl-1-phosphate (HK-MTPenyl-1-P), which is then dephosphorylated to form the acireductone 1,2-dihydroxy-3-keto-5-methylthiopentene (DHK-MTPene). The chain is Enolase-phosphatase E1 (enoph1) from Dictyostelium discoideum (Social amoeba).